Here is a 278-residue protein sequence, read N- to C-terminus: Shikimate dehydrogenase (NADP(+)) (278 aa).

Shikimate is bound by residues 19–21 and Thr66; that span reads SRS. The active-site Proton acceptor is Lys70. 2 residues coordinate shikimate: Asn91 and Asp106. NADP(+) contacts are provided by residues 129–133 and Phe221; that span reads GAGGA. Tyr223 provides a ligand contact to shikimate. Gly242 lines the NADP(+) pocket.

This sequence belongs to the shikimate dehydrogenase family. Homodimer.

It catalyses the reaction shikimate + NADP(+) = 3-dehydroshikimate + NADPH + H(+). It participates in metabolic intermediate biosynthesis; chorismate biosynthesis; chorismate from D-erythrose 4-phosphate and phosphoenolpyruvate: step 4/7. In terms of biological role, involved in the biosynthesis of the chorismate, which leads to the biosynthesis of aromatic amino acids. Catalyzes the reversible NADPH linked reduction of 3-dehydroshikimate (DHSA) to yield shikimate (SA). This is Shikimate dehydrogenase (NADP(+)) from Anaeromyxobacter dehalogenans (strain 2CP-1 / ATCC BAA-258).